Reading from the N-terminus, the 636-residue chain is 1-deoxy-D-xylulose-5-phosphate synthase (636 aa).

Residues histidine 77 and 118-120 each bind thiamine diphosphate; that span reads GHS. Mg(2+) is bound at residue aspartate 149. Thiamine diphosphate-binding positions include 150 to 151, asparagine 178, tyrosine 290, and glutamate 375; that span reads GA. A Mg(2+)-binding site is contributed by asparagine 178.

It belongs to the transketolase family. DXPS subfamily. As to quaternary structure, homodimer. The cofactor is Mg(2+). Requires thiamine diphosphate as cofactor.

The enzyme catalyses D-glyceraldehyde 3-phosphate + pyruvate + H(+) = 1-deoxy-D-xylulose 5-phosphate + CO2. Its pathway is metabolic intermediate biosynthesis; 1-deoxy-D-xylulose 5-phosphate biosynthesis; 1-deoxy-D-xylulose 5-phosphate from D-glyceraldehyde 3-phosphate and pyruvate: step 1/1. Catalyzes the acyloin condensation reaction between C atoms 2 and 3 of pyruvate and glyceraldehyde 3-phosphate to yield 1-deoxy-D-xylulose-5-phosphate (DXP). The sequence is that of 1-deoxy-D-xylulose-5-phosphate synthase from Cytophaga hutchinsonii (strain ATCC 33406 / DSM 1761 / CIP 103989 / NBRC 15051 / NCIMB 9469 / D465).